A 297-amino-acid polypeptide reads, in one-letter code: MVALADYPQIAAGKVRQLHAVDDEHLLLVASDRISAFDHVLSTPIPDKGRVLTAMSVFWFNLLSDVVPNHLVAWDDPRIPAEVRGRALLVRRLEMLQVECVARGYLTGSGLLDYQRTGAVCGVVLPEGLTEASRLPEPIFTPATKAELGAHDENVSFEAVAEAVGQELAAELRELTLRVYGRAAEHARERGVILADTKFEFGVAGGGALVLGDEVLTPDSSRYWPADGYEPGKVQPSFDKQYVRNWLTSAESGWDRASDTPPPPLPDDVVAATRARYVEAYERITGLDLADWPSPAA.

It belongs to the SAICAR synthetase family.

The enzyme catalyses 5-amino-1-(5-phospho-D-ribosyl)imidazole-4-carboxylate + L-aspartate + ATP = (2S)-2-[5-amino-1-(5-phospho-beta-D-ribosyl)imidazole-4-carboxamido]succinate + ADP + phosphate + 2 H(+). It functions in the pathway purine metabolism; IMP biosynthesis via de novo pathway; 5-amino-1-(5-phospho-D-ribosyl)imidazole-4-carboxamide from 5-amino-1-(5-phospho-D-ribosyl)imidazole-4-carboxylate: step 1/2. The polypeptide is Phosphoribosylaminoimidazole-succinocarboxamide synthase (Saccharopolyspora erythraea (strain ATCC 11635 / DSM 40517 / JCM 4748 / NBRC 13426 / NCIMB 8594 / NRRL 2338)).